A 373-amino-acid chain; its full sequence is uncharacterized protein (373 aa).

The CP-type G domain maps to 14 to 168; the sequence is KKIVNKIIDE…LMDTPGVLEM (155 aa). 117–124 is a GTP binding site; it reads GYPNVGKS.

This sequence belongs to the TRAFAC class YlqF/YawG GTPase family.

This is an uncharacterized protein from Methanocaldococcus jannaschii (strain ATCC 43067 / DSM 2661 / JAL-1 / JCM 10045 / NBRC 100440) (Methanococcus jannaschii).